The sequence spans 217 residues: MKILVTGFDPFGGEKINPALETIKLLPNEILGAKIIKLEIPTVIGKSVAKIKDMIEKENPDVVLSIGQAGNRADISVERIGINIDDCRIPDNEGNQPIDEPVVKDGPAAYFVTLPIKAIVEKVKAGKIPASISNTAGTFICNHVCYGVAHIAAARTAQGKPMKSGFIHIPFLPEQVIGKPALTPSMSLEMIVKGIELAIEAIVQNNSDIKVSGGKIC.

Catalysis depends on residues Glu78, Cys141, and His168.

Belongs to the peptidase C15 family. As to quaternary structure, homotetramer.

It localises to the cytoplasm. The catalysed reaction is Release of an N-terminal pyroglutamyl group from a polypeptide, the second amino acid generally not being Pro.. In terms of biological role, removes 5-oxoproline from various penultimate amino acid residues except L-proline. The protein is Pyrrolidone-carboxylate peptidase of Treponema denticola (strain ATCC 35405 / DSM 14222 / CIP 103919 / JCM 8153 / KCTC 15104).